Reading from the N-terminus, the 207-residue chain is Cytidylate kinase (207 aa).

Residue 7-15 (GVAASGKSS) participates in ATP binding.

The protein belongs to the cytidylate kinase family. Type 1 subfamily.

The protein resides in the cytoplasm. It carries out the reaction CMP + ATP = CDP + ADP. The catalysed reaction is dCMP + ATP = dCDP + ADP. In Deinococcus deserti (strain DSM 17065 / CIP 109153 / LMG 22923 / VCD115), this protein is Cytidylate kinase.